A 184-amino-acid chain; its full sequence is Adenine phosphoribosyltransferase (184 aa).

The protein belongs to the purine/pyrimidine phosphoribosyltransferase family. As to quaternary structure, homodimer.

It localises to the cytoplasm. It carries out the reaction AMP + diphosphate = 5-phospho-alpha-D-ribose 1-diphosphate + adenine. It participates in purine metabolism; AMP biosynthesis via salvage pathway; AMP from adenine: step 1/1. Catalyzes a salvage reaction resulting in the formation of AMP, that is energically less costly than de novo synthesis. The sequence is that of Adenine phosphoribosyltransferase from Parafrankia sp. (strain EAN1pec).